The chain runs to 172 residues: Disulfide bond formation protein B (172 aa).

The Cytoplasmic portion of the chain corresponds to 1–16; the sequence is MNLFASLNQFSKNRIS. A helical transmembrane segment spans residues 17-33; that stretch reads WLLLLLFVVFFEGAALF. Topologically, residues 34-51 are periplasmic; sequence FQHVMMLSPCVMCIYERV. Cys43 and Cys46 form a disulfide bridge. The chain crosses the membrane as a helical span at residues 52–67; the sequence is AMLGVGGAALFGLIAP. Topologically, residues 68-74 are cytoplasmic; it reads NNPLVRW. Residues 75-92 traverse the membrane as a helical segment; sequence LGLAAWGASAYKGLALSL. Topologically, residues 93 to 147 are periplasmic; sequence QHVDYQFNPSPFATCDLFVTFPDWAPLNQWAPWMFEAYGDCSKIVWQFMTLSMPQ. A disulfide bridge connects residues Cys107 and Cys133. A helical transmembrane segment spans residues 148–166; the sequence is WLVIIFAGNLVALAFIVIA. The Cytoplasmic portion of the chain corresponds to 167–172; sequence QFFKSK.

It belongs to the DsbB family.

The protein localises to the cell inner membrane. Its function is as follows. Required for disulfide bond formation in some periplasmic proteins. Acts by oxidizing the DsbA protein. This Vibrio vulnificus (strain CMCP6) protein is Disulfide bond formation protein B.